The primary structure comprises 120 residues: UPF0102 protein HSM_1206 (120 aa).

The protein belongs to the UPF0102 family.

This is UPF0102 protein HSM_1206 from Histophilus somni (strain 2336) (Haemophilus somnus).